Here is a 785-residue protein sequence, read N- to C-terminus: Mitochondrial intermediate peptidase (785 aa).

The N-terminal 26 residues, 1 to 26 (MLKVTTSRPWVCSRCVRRQVQSRRRL), are a transit peptide targeting the mitochondrion. The disordered stretch occupies residues 26–51 (LATASTQYRESRPVPVDNSAPGAKRD). Residue H566 coordinates Zn(2+). The active site involves E567. Zn(2+) is bound by residues H570 and H573.

The protein belongs to the peptidase M3 family. Zn(2+) serves as cofactor.

The protein localises to the mitochondrion matrix. The enzyme catalyses Release of an N-terminal octapeptide as second stage of processing of some proteins imported into the mitochondrion.. Cleaves proteins, imported into the mitochondrion, to their mature size. While most mitochondrial precursor proteins are processed to the mature form in one step by mitochondrial processing peptidase (MPP), the sequential cleavage by MIP of an octapeptide after initial processing by MPP is a required step for a subgroup of nuclear-encoded precursor proteins destined for the matrix or the inner membrane. In Botryotinia fuckeliana (strain B05.10) (Noble rot fungus), this protein is Mitochondrial intermediate peptidase (oct1).